A 326-amino-acid chain; its full sequence is Apoptosis facilitator Bcl-2-like protein 14 (326 aa).

Ser44 is subject to Phosphoserine. Residues 100 to 147 (AEKEEDSQSSPPEICAQAQRSGVPQARPRSPKWPRSRSSMDQRLEHKA) are disordered. The span at 137–147 (SSMDQRLEHKA) shows a compositional bias: basic and acidic residues. The short motif at 211–225 (IVELLKYSGEQLERE) is the BH3 element. Residues 307–314 (WIQQHGGW) carry the BH2 motif.

This sequence belongs to the Bcl-2 family. Phosphorylated by MELK, leading to inhibit its pro-apoptotic function.

The protein resides in the cytoplasm. Its function is as follows. Plays a role in apoptosis. The chain is Apoptosis facilitator Bcl-2-like protein 14 (BCL2L14) from Bos taurus (Bovine).